Consider the following 231-residue polypeptide: Chalcone--flavanone isomerase (231 aa).

Substrate-binding residues include Thr46, Asn111, and Ser188.

Belongs to the chalcone isomerase family. Pericarp.

The catalysed reaction is a chalcone = a flavanone.. The protein operates within secondary metabolite biosynthesis; flavonoid biosynthesis. Its function is as follows. Catalyzes the intramolecular cyclization of bicyclic chalcones into tricyclic (S)-flavanones. Responsible for the isomerization of 4,2',4',6'-tetrahydroxychalcone (also termed chalcone) into naringenin. This chain is Chalcone--flavanone isomerase (CHI), found in Zea mays (Maize).